The following is a 22-amino-acid chain: Antimicrobial peptide 4 (22 aa).

In terms of tissue distribution, expressed by the skin glands.

The protein localises to the secreted. Functionally, has very strong antimicrobial activity against Gram-positive bacterium S.aureus and yeast C.albicans, and very weak activity against Gram-negative bacterium E.coli. Has strong hemolytic activity against human red blood cells. This chain is Antimicrobial peptide 4, found in Xenopus tropicalis (Western clawed frog).